Reading from the N-terminus, the 126-residue chain is DNA-directed RNA polymerase I subunit RPA12 (126 aa).

Residues cysteine 20, cysteine 23, cysteine 38, cysteine 41, cysteine 87, and cysteine 90 each contribute to the Zn(2+) site. A C4-type zinc finger spans residues 20–41 (CSDCGSVLPLPGAQDTVTCTRC). The TFIIS-type zinc finger occupies 83 to 123 (VDRRCPRCGHEGMAYHTRQMRSADEGQTVFYTCTNCKFQEK). Positions 106 to 107 (DE) match the Hairpin motif. Positions 115 and 118 each coordinate Zn(2+).

Belongs to the archaeal RpoM/eukaryotic RPA12/RPB9/RPC11 RNA polymerase family. Component of the RNA polymerase I (Pol I) complex consisting of 13 subunits: a ten-subunit catalytic core composed of POLR1A/RPA1, POLR1B/RPA2, POLR1C/RPAC1, POLR1D/RPAC2, POLR1H/RPA12, POLR2E/RPABC1, POLR2F/RPABC2, POLR2H/RPABC3, POLR2K/RPABC4 and POLR2L/RPABC5; a mobile stalk subunit POLR1F/RPA43 protruding from the core and additional subunits homologous to general transcription factors POLR1E/RPA49 and POLR1G/RPA34. Part of Pol I pre-initiation complex (PIC), in which Pol I core assembles with RRN3 and promoter-bound UTBF and SL1/TIF-IB complex.

The protein localises to the nucleus. It localises to the nucleolus. Its function is as follows. Core component of RNA polymerase I (Pol I), a DNA-dependent RNA polymerase which synthesizes ribosomal RNA precursors using the four ribonucleoside triphosphates as substrates. Can mediate Pol I proofreading of the nascent RNA transcript. Anchors into the Pol I active site to monitor transcription fidelity and cleave mis-incorporated 5'-ribonucleotides. In Macaca mulatta (Rhesus macaque), this protein is DNA-directed RNA polymerase I subunit RPA12.